We begin with the raw amino-acid sequence, 476 residues long: Serine/threonine-protein kinase PBL36 (476 aa).

The 287-residue stretch at 126–412 (FRPESLLGEG…VEALKPLPNL (287 aa)) folds into the Protein kinase domain. Residues 132 to 140 (LGEGGFGCV) and Lys164 contribute to the ATP site. Tyr209 carries the phosphotyrosine modification. Asp259 acts as the Proton acceptor in catalysis. Residues Ser263 and Ser293 each carry the phosphoserine modification. A phosphothreonine mark is found at Thr294 and Thr299. Tyr307 bears the Phosphotyrosine mark. Residues 431-476 (NGVRTQGGGFVSRNGPPMRSLSSLNLPQASPYRYARQSPKPKGKEP) are disordered.

This sequence belongs to the protein kinase superfamily. Ser/Thr protein kinase family. In terms of assembly, interacts with SD129. Post-translationally, phosphorylated by SD129 in response to the pathogen-associated molecular pattern (PAMP) 3-OH-C10:0, a medium-chain 3-hydroxy fatty acid.

The protein localises to the cell membrane. The catalysed reaction is L-seryl-[protein] + ATP = O-phospho-L-seryl-[protein] + ADP + H(+). It catalyses the reaction L-threonyl-[protein] + ATP = O-phospho-L-threonyl-[protein] + ADP + H(+). Involved in chitin-triggered immune signaling and is required for reactive oxygen species (ROS) production. Acts downstream of SD129 in defense signaling triggered by the pathogen-associated molecular pattern (PAMP) 3-OH-C10:0, a medium-chain 3-hydroxy fatty acid. The sequence is that of Serine/threonine-protein kinase PBL36 from Arabidopsis thaliana (Mouse-ear cress).